Consider the following 73-residue polypeptide: UPF0235 protein PCC7424_0673 (73 aa).

This sequence belongs to the UPF0235 family.

The polypeptide is UPF0235 protein PCC7424_0673 (Gloeothece citriformis (strain PCC 7424) (Cyanothece sp. (strain PCC 7424))).